Here is an 819-residue protein sequence, read N- to C-terminus: DNA mismatch repair protein MutS (819 aa).

596–603 (GPNMSGKS) serves as a coordination point for ATP.

This sequence belongs to the DNA mismatch repair MutS family.

In terms of biological role, this protein is involved in the repair of mismatches in DNA. It is possible that it carries out the mismatch recognition step. This protein has a weak ATPase activity. In Thermosipho melanesiensis (strain DSM 12029 / CIP 104789 / BI429), this protein is DNA mismatch repair protein MutS.